Consider the following 394-residue polypeptide: MSKEKFERTKPHVNVGTIGHVDHGKTTLTAAICTTLAKVYGGEAKDFASIDNAPEERERGITIATSHVEYDTPSRHYAHVDCPGHADYVKNMITGAAQMDGGILVVAATDGPMPQTREHILLGRQVGIPYIIVFMNKCDMVDDEELLELVEMEVRELLSEYDFPGDDLPVIQGSALGALNGEEQWEAKIVELAEALDTYIPEPERAVDQPFLMPIEDVFSIQGRGTVVTGRIERGILTVGDEVAIVGIKDTTTTTCTGVEMFRKLLDEGRAGENVGALLRGTKRDEVERGQVLAKPGSITPHTKFESEVYVLSKEEGGRHTPFFKGYRPQFYFRTTDVTGDISLPEGVEMVMPGDNIQMVVELIAPIAMDEGLRFAIREGGRTVGAGVVAKIFE.

The 195-residue stretch at 10-204 folds into the tr-type G domain; it reads KPHVNVGTIG…ALDTYIPEPE (195 aa). The segment at 19-26 is G1; sequence GHVDHGKT. 19–26 provides a ligand contact to GTP; the sequence is GHVDHGKT. A Mg(2+)-binding site is contributed by Thr-26. Residues 60-64 form a G2 region; it reads GITIA. Residues 81–84 are G3; that stretch reads DCPG. GTP is bound by residues 81 to 85 and 136 to 139; these read DCPGH and NKCD. A G4 region spans residues 136–139; it reads NKCD. Residues 174-176 are G5; that stretch reads SAL.

Belongs to the TRAFAC class translation factor GTPase superfamily. Classic translation factor GTPase family. EF-Tu/EF-1A subfamily. Monomer.

The protein resides in the cytoplasm. It carries out the reaction GTP + H2O = GDP + phosphate + H(+). In terms of biological role, GTP hydrolase that promotes the GTP-dependent binding of aminoacyl-tRNA to the A-site of ribosomes during protein biosynthesis. This Vibrio parahaemolyticus serotype O3:K6 (strain RIMD 2210633) protein is Elongation factor Tu.